Here is a 270-residue protein sequence, read N- to C-terminus: NAD kinase (270 aa).

Asp-63 functions as the Proton acceptor in the catalytic mechanism. NAD(+) is bound by residues 63–64 (DG), 131–132 (NE), Lys-142, Arg-159, Asp-161, 172–177 (TAYAMS), Ala-196, and Gln-230.

The protein belongs to the NAD kinase family. Requires a divalent metal cation as cofactor.

Its subcellular location is the cytoplasm. The enzyme catalyses NAD(+) + ATP = ADP + NADP(+) + H(+). Functionally, involved in the regulation of the intracellular balance of NAD and NADP, and is a key enzyme in the biosynthesis of NADP. Catalyzes specifically the phosphorylation on 2'-hydroxyl of the adenosine moiety of NAD to yield NADP. The chain is NAD kinase from Methanoculleus marisnigri (strain ATCC 35101 / DSM 1498 / JR1).